A 385-amino-acid polypeptide reads, in one-letter code: Benzoylsuccinyl-CoA thiolase subunit BbsB (385 aa).

R19 contacts CoA. C84 acts as the Acyl-thioester intermediate in catalysis. CoA-binding residues include G121, R193, C204, and C205.

This sequence belongs to the thiolase-like superfamily. Thiolase family. Heterotetramer composed of two BbsA subunits and two BbsB subunits. BbsB forms homodimeric subcomplexes. Both BbsA and BbsB are essential for enzymatic activity.

The catalysed reaction is (S)-2-benzoylsuccinyl-CoA + CoA = benzoyl-CoA + succinyl-CoA. Its pathway is xenobiotic degradation; toluene degradation. Component of the BbsAB thiolase complex, which catalyzes the thiolytic cleavage of (S)-2-benzoylsuccinyl-CoA to succinyl-CoA and benzoyl-CoA, the final step of anaerobic toluene metabolism. This Thauera aromatica protein is Benzoylsuccinyl-CoA thiolase subunit BbsB.